Reading from the N-terminus, the 602-residue chain is SAGA complex subunit SPT8 (602 aa).

The segment at 1–141 (MDEVDDILIN…REASSSTHEA (141 aa)) is disordered. Composition is skewed to acidic residues over residues 14–23 (VDDEEDDEEM) and 36–75 (EGND…DGED). Threonine 85 carries the phosphothreonine modification. Phosphoserine is present on residues serine 108, serine 123, and serine 131. 2 WD repeats span residues 173 to 212 (PIQT…EGKL) and 305 to 346 (GHTQ…NEFK). The disordered stretch occupies residues 366-418 (VSGNVNSGKENENADDDMDSLFGDEDEDEKQDAGNEPVETGDGSNGEENKEQI). Positions 378 to 395 (NADDDMDSLFGDEDEDEK) are enriched in acidic residues. WD repeat units follow at residues 415–454 (KEQI…SPAL), 506–544 (SISG…DASN), and 560–600 (HHGG…YDID). At serine 451 the chain carries Phosphoserine.

The protein belongs to the WD repeat SPT8 family. In terms of assembly, component of the 1.8 MDa SAGA (Spt-Ada-Gcn5 acetyltransferase) complex, which is composed of 19 subunits TRA1, SPT7, TAF5, NGG1/ADA3, SGF73, SPT20/ADA5, SPT8, TAF12, TAF6, HFI1/ADA1, UBP8, GCN5, ADA2, SPT3, SGF29, TAF10, TAF9, SGF11 and SUS1. The SAGA complex is composed of 4 modules, namely the HAT (histone acetyltransferase) module (GCN5, ADA2, NGG1/ADA3 and SGF29), the DUB (deubiquitinating) module (UBP8, SGF11, SGF73 and SUS1), the core or TAF (TBP-associated factor) module (TAF5, TAF6, TAF9, TAF10 and TAF12), and the Tra1 or SPT (Suppressor of Ty) module (TRA1, HFI1/ADA1, SPT3, SPT7, SPT8 and SPT20/ADA5). The Tra1/SPT module binds activators, the core module recruits TBP (TATA-binding protein), the HAT module contains the histone H3 acetyltransferase GCN5, and the DUB module comprises the histone H2B deubiquitinase UBP8.

The protein localises to the nucleus. In terms of biological role, component of the transcription coactivator SAGA complex. SAGA acts as a general cofactor required for essentially all RNA polymerase II transcription. At the promoters, SAGA is required for transcription pre-initiation complex (PIC) recruitment. It influences RNA polymerase II transcriptional activity through different activities such as TBP interaction (via core/TAF module) and promoter selectivity, interaction with transcription activators (via Tra1/SPT module), and chromatin modification through histone acetylation (via HAT module) and deubiquitination (via DUB module). SAGA preferentially acetylates histones H3 (to form H3K9ac, H3K14ac, H3K18ac and H3K23ac) and H2B and deubiquitinates histone H2B. SAGA interacts with DNA via upstream activating sequences (UASs). During SAGA-mediated transcriptional inhibition, SPT3 and SPT8 prevent binding of TBP to the TATA box. This chain is SAGA complex subunit SPT8 (SPT8), found in Saccharomyces cerevisiae (strain ATCC 204508 / S288c) (Baker's yeast).